A 63-amino-acid polypeptide reads, in one-letter code: H/ACA ribonucleoprotein complex subunit 3-like protein (63 aa).

Residues K18–Y40 form a disordered region.

This sequence belongs to the NOP10 family. Component of the small nucleolar ribonucleoprotein particles containing H/ACA-type snoRNAs (H/ACA snoRNPs).

Its subcellular location is the nucleus. The protein localises to the nucleolus. Its function is as follows. Required for ribosome biogenesis. Part of a complex which catalyzes pseudouridylation of rRNA. This involves the isomerization of uridine such that the ribose is subsequently attached to C5, instead of the normal N1. Pseudouridine ('psi') residues may serve to stabilize the conformation of rRNAs. This Trypanosoma cruzi protein is H/ACA ribonucleoprotein complex subunit 3-like protein.